Consider the following 298-residue polypeptide: Tyrosine recombinase XerD (298 aa).

In terms of domain architecture, Core-binding (CB) spans 3 to 88 (SSHNNLLQNF…AIRQFYKFLK (86 aa)). Residues 109-292 (SIPDYLTQDE…ANKTLREVHK (184 aa)) form the Tyr recombinase domain. Residues Arg-149, Lys-173, His-244, Arg-247, and His-270 contribute to the active site. Catalysis depends on Tyr-279, which acts as the O-(3'-phospho-DNA)-tyrosine intermediate.

This sequence belongs to the 'phage' integrase family. XerD subfamily. In terms of assembly, forms a cyclic heterotetrameric complex composed of two molecules of XerC and two molecules of XerD.

The protein resides in the cytoplasm. Its function is as follows. Site-specific tyrosine recombinase, which acts by catalyzing the cutting and rejoining of the recombining DNA molecules. The XerC-XerD complex is essential to convert dimers of the bacterial chromosome into monomers to permit their segregation at cell division. It also contributes to the segregational stability of plasmids. The sequence is that of Tyrosine recombinase XerD from Leptospira interrogans serogroup Icterohaemorrhagiae serovar copenhageni (strain Fiocruz L1-130).